The following is a 443-amino-acid chain: Endothelin receptor type B (443 aa).

The signal sequence occupies residues 1-26; sequence MQPLPTLCGRVLVALILACGVAGVQG. Residues 27–102 lie on the Extracellular side of the membrane; that stretch reads EERRFPPARA…RTIEIKETFK (76 aa). Over residues 51-62 the composition is skewed to polar residues; sequence TKTSWPTGSNAS. The segment at 51 to 89 is disordered; that stretch reads TKTSWPTGSNASVPRLSAPPQMPKAGRTAGAQRRTLPPP. Asn60 carries an N-linked (GlcNAc...) asparagine glycan. The helical transmembrane segment at 103-127 threads the bilayer; it reads YINTVVSCLVFVLGIIGNSTLLRII. Residues 128 to 138 are Cytoplasmic-facing; it reads YKNKCMRNGPN. A helical transmembrane segment spans residues 139 to 164; that stretch reads ILIASLALGDLLHIIIDIPINVYKLL. Residues 165 to 176 are Extracellular-facing; that stretch reads AEDWPFGVEMCK. Cysteines 175 and 256 form a disulfide. A helical transmembrane segment spans residues 177–198; the sequence is LVPFIQKASVGITVLSLCALSI. Topologically, residues 199–219 are cytoplasmic; the sequence is DRYRAVASWSRIKGIGVPKWT. A helical transmembrane segment spans residues 220–244; the sequence is AVEIVLIWVVSVVLAVPEAVGFDMI. Over 245–272 the chain is Extracellular; that stretch reads TADYKGSYLRICLLHPTQKTAFMQFYKN. The helical transmembrane segment at 273 to 297 threads the bilayer; sequence AKDWWLFSFYFCLPLAITAFFYTLE. Residues 298-325 are Cytoplasmic-facing; the sequence is TCEMLRKKSGMQIALNDHLKQRREVAKT. Ser306 carries the post-translational modification Phosphoserine. The chain crosses the membrane as a helical span at residues 326-351; it reads VFCLVLVFALCWLPLHLSRILKHTLY. Over 352-363 the chain is Extracellular; that stretch reads DQNDPHRCELLS. A helical transmembrane segment spans residues 364-390; the sequence is FLLVLEYIGINMASLNSCINPIALYLV. Topologically, residues 391-443 are cytoplasmic; that stretch reads SKRFKNCFKWCLCCWCQSFEEKQSLEDKQSCLKFKANDHGYDNFRSSNKYSSS. 3 S-palmitoyl cysteine lipidation sites follow: Cys403, Cys404, and Cys406. At Ser420 the chain carries Phosphoserine. Position 440 is a phosphotyrosine (Tyr440). Phosphoserine occurs at positions 441, 442, and 443.

It belongs to the G-protein coupled receptor 1 family. Endothelin receptor subfamily. EDNRB sub-subfamily.

It localises to the cell membrane. In terms of biological role, non-specific receptor for endothelin 1, 2, and 3. Mediates its action by association with G proteins that activate a phosphatidylinositol-calcium second messenger system. The protein is Endothelin receptor type B (EDNRB) of Equus caballus (Horse).